The following is a 440-amino-acid chain: Probable exopolygalacturonase C (440 aa).

A signal peptide spans 1 to 21 (MLITNPALLGILASLVPLALG). N-linked (GlcNAc...) asparagine glycosylation is found at N84 and N151. 3 PbH1 repeats span residues 188–210 (GDDI…PFNT), 217–238 (GTNI…AVNT), and 240–261 (SHNI…SIGS). N219 carries N-linked (GlcNAc...) asparagine glycosylation. Residue D231 is the Proton donor of the active site. Residue H255 is part of the active site. Residue N271 is glycosylated (N-linked (GlcNAc...) asparagine). The PbH1 4 repeat unit spans residues 272–293 (ITNLRFEDVTVIDALYAARFKS). An N-linked (GlcNAc...) asparagine glycan is attached at N313. C389 and C395 are oxidised to a cystine. Residue N434 is glycosylated (N-linked (GlcNAc...) asparagine).

This sequence belongs to the glycosyl hydrolase 28 family.

It localises to the secreted. It catalyses the reaction [(1-&gt;4)-alpha-D-galacturonosyl](n) + H2O = alpha-D-galacturonate + [(1-&gt;4)-alpha-D-galacturonosyl](n-1). In terms of biological role, specific in hydrolyzing the terminal glycosidic bond of polygalacturonic acid and oligogalacturonates. The polypeptide is Probable exopolygalacturonase C (pgxC) (Aspergillus fumigatus (strain ATCC MYA-4609 / CBS 101355 / FGSC A1100 / Af293) (Neosartorya fumigata)).